The sequence spans 258 residues: Transcription factor ORG3 (258 aa).

Positions 76-128 (VKKLNHNASERDRRRKINSLFSSLRSCLPASGQSKKLSIPATVSRSLKYIPEL) constitute a bHLH domain.

Homodimer. As to expression, expressed in vascular tissues. Detected in roots.

Its subcellular location is the nucleus. The sequence is that of Transcription factor ORG3 (ORG3) from Arabidopsis thaliana (Mouse-ear cress).